The chain runs to 356 residues: 1-deoxy-D-xylulose 5-phosphate reductoisomerase (356 aa).

NADPH-binding residues include T7, G8, S9, I10, G31, N33, and N111. A 1-deoxy-D-xylulose 5-phosphate-binding site is contributed by K112. E113 provides a ligand contact to NADPH. D131 lines the Mn(2+) pocket. 4 residues coordinate 1-deoxy-D-xylulose 5-phosphate: S132, E133, S155, and H178. Residue E133 coordinates Mn(2+). G184 is an NADPH binding site. 1-deoxy-D-xylulose 5-phosphate is bound by residues S191, N196, K197, and E200. E200 serves as a coordination point for Mn(2+).

Belongs to the DXR family. Requires Mg(2+) as cofactor. Mn(2+) is required as a cofactor.

The catalysed reaction is 2-C-methyl-D-erythritol 4-phosphate + NADP(+) = 1-deoxy-D-xylulose 5-phosphate + NADPH + H(+). Its pathway is isoprenoid biosynthesis; isopentenyl diphosphate biosynthesis via DXP pathway; isopentenyl diphosphate from 1-deoxy-D-xylulose 5-phosphate: step 1/6. Its function is as follows. Catalyzes the NADPH-dependent rearrangement and reduction of 1-deoxy-D-xylulose-5-phosphate (DXP) to 2-C-methyl-D-erythritol 4-phosphate (MEP). This chain is 1-deoxy-D-xylulose 5-phosphate reductoisomerase, found in Campylobacter jejuni subsp. jejuni serotype O:23/36 (strain 81-176).